We begin with the raw amino-acid sequence, 520 residues long: AAA-ATPase At5g57480 (520 aa).

Positions 1–24 (MKEYWTSLASLLGVLAFCQSLMQS) are cleaved as a signal peptide. 244–251 (GPPGTGKS) is an ATP binding site. Disordered stretches follow at residues 307–340 (KKNSSNVSSQRSYYDAETRNGSGSGSGGSGEEGG) and 467–520 (NVKD…TRED). The span at 328 to 340 (SGSGSGGSGEEGG) shows a compositional bias: gly residues. Residues 497–512 (QNEDEDHDEEEIELED) are compositionally biased toward acidic residues.

Belongs to the AAA ATPase family. BCS1 subfamily. Mg(2+) serves as cofactor.

The enzyme catalyses ATP + H2O = ADP + phosphate + H(+). The chain is AAA-ATPase At5g57480 from Arabidopsis thaliana (Mouse-ear cress).